The following is a 591-amino-acid chain: Aspartate--tRNA ligase (591 aa).

Glu-171 serves as a coordination point for L-aspartate. An aspartate region spans residues 195 to 198 (QLFK). Residue Arg-217 coordinates L-aspartate. ATP contacts are provided by residues 217–219 (RDE) and Gln-226. An L-aspartate-binding site is contributed by His-448. Residue Glu-482 participates in ATP binding. Arg-489 lines the L-aspartate pocket. 534–537 (GLDR) contributes to the ATP binding site.

The protein belongs to the class-II aminoacyl-tRNA synthetase family. Type 1 subfamily. Homodimer.

The protein localises to the cytoplasm. The catalysed reaction is tRNA(Asp) + L-aspartate + ATP = L-aspartyl-tRNA(Asp) + AMP + diphosphate. Catalyzes the attachment of L-aspartate to tRNA(Asp) in a two-step reaction: L-aspartate is first activated by ATP to form Asp-AMP and then transferred to the acceptor end of tRNA(Asp). This is Aspartate--tRNA ligase from Vibrio cholerae serotype O1 (strain ATCC 39541 / Classical Ogawa 395 / O395).